Reading from the N-terminus, the 1026-residue chain is MLEDTWEEEIWEYKSKRKPKPVHPNNCSENISESVEKSTDGKHQSKGNEKRTSENPGKTKDHKVCLAETDSQISAGSSQSSSCRDESQQSQNKETTPKKQHRTRRGKQVTPKVRPVYDGYCPSCQMPFSSLLGQTPQWHVFECLDSPPISDTECPEGLLCTSTIPSHYKKYTHILLAQSRDSKEPLGSPSDALAGLFAAAAPGSPCNLEERRSMTLKTENLRKVSDHSLLMMQYLETSQPSAEINRKNVSSPCSQTSPVPQCAEFVKRDQLVGGGSPLAEVALNSQSKSGSMGLPLPENDTDSCEISYSPLHSDEETYDIDQELDDSQQELFFTQSSKDSSLEEDGSAIFENLHGPSPKEAEGIRPTAKSLVAQARCSAPSEGSTLSDSFLLLSYTSNRLSQEDLPHTDAAFHLLSPALAVGGAASNYQTSKAKLDEPEKFLSLASSHQQQKIETSAVGNQTSLPLLTRARSKPLEKEGGKCLPLHPTQSQTRGSPRKGLGAPGANCACRNAQKRSSMPLDKPLGTSPSSPKCSPSQPSKKVMKQMDIGVFFGLPPKRQETSLRESASEGPNVSPVVSPNQKRPRLCKRKAQSSLSDLEFDAKNLNESQHSVGLSGEKRQHRRKRHKTSNSPREGPCQRRSGHLMNNPELGPVSLSKAFVRRTRGRTQRGNMNISESSGAGEVRRTCPFYKRIPGTGFTVDAFQYGEIEGCTAYFLTHFHSDHYAGLSKDFTRPVYCSEITGNLLKKKLRVQEQYIRQLPMDTECVVDSVKVVLLDANHCPGATMILFQLPNGAVILHTGDFRADPSMERSRLAGRKVHTLFLDTTYCSPEYTFPSQQEVIQFAINTAFEAVTLNPRALVVCGTYCIGKEKVFLAIADVLGSKVGMSQEKYKTLQCLNIPEVSSLITTDMCDSLVHLLPMMQINFKGLQSHLKKCGGKYDQILAFRPTGWTHSNNITSTADIIPQTRGNISIYGIPYSEHSSYLEMKRFVQWLKPQKIIPTVNVGSFRSRNTMEKYFKEWRLEAGY.

The nuclear localization region stretch occupies residues 1 to 189; the sequence is MLEDTWEEEI…RDSKEPLGSP (189 aa). The disordered stretch occupies residues 12 to 110; sequence EYKSKRKPKP…HRTRRGKQVT (99 aa). The segment covering 34 to 65 has biased composition (basic and acidic residues); the sequence is SVEKSTDGKHQSKGNEKRTSENPGKTKDHKVC. Residues 71–82 are compositionally biased toward low complexity; sequence SQISAGSSQSSS. A compositionally biased stretch (basic residues) spans 98 to 107; sequence KKQHRTRRGK. A UBZ4-type zinc finger spans residues 118–148; it reads DGYCPSCQMPFSSLLGQTPQWHVFECLDSPP. Positions 121, 124, 139, and 143 each coordinate Zn(2+). Glycyl lysine isopeptide (Lys-Gly) (interchain with G-Cter in SUMO2) cross-links involve residues Lys-359, Lys-434, and Lys-522. Residues 401 to 602 are nuclear focus formation; the sequence is SQEDLPHTDA…SSLSDLEFDA (202 aa). Disordered regions lie at residues 474–542, 560–590, and 602–651; these read PLEK…SKKV, ETSLRESASEGPNVSPVVSPNQKRPRLCKRK, and AKNL…PELG. Residues 527–540 show a composition bias toward low complexity; that stretch reads SPSSPKCSPSQPSK. A compositionally biased stretch (polar residues) spans 569 to 581; sequence EGPNVSPVVSPNQ. Phosphoserine occurs at positions 574 and 578. Residues 619-628 show a composition bias toward basic residues; the sequence is RQHRRKRHKT. Residue Lys-657 forms a Glycyl lysine isopeptide (Lys-Gly) (interchain with G-Cter in SUMO2) linkage.

It belongs to the DNA repair metallo-beta-lactamase (DRMBL) family. Binds constitutively to TP53BP1. Binds CDC27, which is itself a component of the anaphase promoting complex (APC). Binds PIAS1.

It localises to the nucleus. It carries out the reaction a beta-lactam + H2O = a substituted beta-amino acid. Its function is as follows. May be required for DNA interstrand cross-link repair. Also required for checkpoint mediated cell cycle arrest in early prophase in response to mitotic spindle poisons. The chain is DNA cross-link repair 1A protein (Dclre1a) from Mus musculus (Mouse).